The chain runs to 735 residues: Protein STRUBBELIG-RECEPTOR FAMILY 2 (735 aa).

The N-terminal stretch at 1-23 (MKTKQQLRFLATILLTTILFVLA) is a signal peptide. At 24 to 297 (KTDTDPLEVL…KKKKKGIGAG (274 aa)) the chain is on the extracellular side. 8 LRR repeats span residues 78-94 (LRELKLLGSLGNQLQHL), 96-119 (NLKILDVSFNNLEGEIPFGLPPNA), 120-140 (THINMAYNNLTQSIPFSLPLM), 142-163 (SLQSLNLSHNSLSGPLGNVFSG), 165-187 (QIKEMDLSFNNLTGDLPSSFGTL), 189-211 (NLTSLYLQNNRLTGSVIYLADLP), 212-232 (LADLNIEDNQFSGIIPSHFQS), and 233-253 (IPHLWIWGNKFHVEPNYKPWK). Residues Asn-118, Asn-128, Asn-147, Asn-175, and Asn-189 are each glycosylated (N-linked (GlcNAc...) asparagine). Asn-264 carries an N-linked (GlcNAc...) asparagine glycan. A helical transmembrane segment spans residues 298-318 (STFLLVGGLALLGTFFALFAV). At 319-735 (RMNHRRAQNL…SSPTFSYLSS (417 aa)) the chain is on the cytoplasmic side. Residues 358 to 378 (PQIKRFQPPPAPQLRHLPSPP) form a disordered region. The Protein kinase domain maps to 415 to 695 (FSEENLLGEG…EIVEALTALI (281 aa)).

It belongs to the protein kinase superfamily. Ser/Thr protein kinase family. In terms of tissue distribution, expressed in seedlings, roots, stems, leaves, flowers and siliques.

It is found in the membrane. This Arabidopsis thaliana (Mouse-ear cress) protein is Protein STRUBBELIG-RECEPTOR FAMILY 2 (SRF2).